A 299-amino-acid polypeptide reads, in one-letter code: MAQNLKDLAGRLPSGPRGMGTALKLLLGAGAVAYGVRESVFTVEGGHRAIFFNRIGGVQQDTILAEGLHFRIPWFQYPIIYDIRARPRKISSPTGSKDLQMVNISLRVLSRPNAQELPSMYQRLGLDYEERVLPSIVNEVLKSVVAKFNASQLITQRAQVSLLIRRELTERAKDFSLILDDVAITELSFSREYTAAVEAKQVAQQEAQRAQFLVEKAKQEQRQKIVQAEGEAEAAKMLGEALSKNPGYIKLRKIRAAQNISKTIATSQNRIYLTADNLVLNLQDESFTRGSDSLIKGKK.

Residue Ala-2 is modified to N-acetylalanine. A necessary for transcriptional repression region spans residues 19 to 49 (MGTALKLLLGAGAVAYGVRESVFTVEGGHRA). Tyr-128 carries the phosphotyrosine modification. Lys-147 bears the N6-acetyllysine mark. The segment at 150–174 (ASQLITQRAQVSLLIRRELTERAKD) is necessary for transcriptional repression. Residue Ser-151 is modified to Phosphoserine. The stretch at 190 to 238 (SREYTAAVEAKQVAQQEAQRAQFLVEKAKQEQRQKIVQAEGEAEAAKML) forms a coiled coil. An N6-acetyllysine mark is found at Lys-200, Lys-236, Lys-250, and Lys-262.

It belongs to the prohibitin family. As to quaternary structure, the mitochondrial prohibitin complex consists of two subunits (PHB1 and PHB2), assembled into a membrane-associated ring-shaped supercomplex of approximately 1 mDa. Interacts with ESR1, HDAC1 and HDAC5. Interacts with ZNF703. Interacts with STOML2. Interacts with ARFGEF3. Interacts with SPHK2. Interacts with COX4I1; the interaction associates PHB2 with COX. Interacts with MAP1LC3B (membrane-bound form LC3-II); the interaction is direct and upon mitochondrial depolarization and proteasome-dependent outer membrane rupture. Interacts with IGFBP6 (via C-terminal domain). Interacts with CLPB. Interacts with CD86 (via cytoplasmic domain); the interactions increases after priming with CD40. Interacts with AFG3L2. Interacts with DNAJC19. Interacts with AKT2; this interaction may be important for myogenic differentiation. Phosphorylated. Tyrosine phosphorylation is indirectly stimulated by IGFBP6.

The protein resides in the mitochondrion inner membrane. The protein localises to the cytoplasm. It localises to the nucleus. Its subcellular location is the cell membrane. Protein with pleiotropic attributes mediated in a cell-compartment- and tissue-specific manner, which include the plasma membrane-associated cell signaling functions, mitochondrial chaperone, and transcriptional co-regulator of transcription factors and sex steroid hormones in the nucleus. Functionally, in the mitochondria, together with PHB, forms large ring complexes (prohibitin complexes) in the inner mitochondrial membrane (IMM) and functions as a chaperone protein that stabilizes mitochondrial respiratory enzymes and maintains mitochondrial integrity in the IMM, which is required for mitochondrial morphogenesis, neuronal survival, and normal lifespan. The prohibitin complex, with DNAJC19, regulates cardiolipin remodeling and the protein turnover of OMA1 in a cardiolipin-binding manner. Also regulates cytochrome-c oxidase assembly (COX) and mitochondrial respiration. Binding to sphingoid 1-phosphate (SPP) modulates its regulator activity. Has a key role of mitophagy receptor involved in targeting mitochondria for autophagic degradation. Involved in mitochondrial-mediated antiviral innate immunity, activates RIG-I-mediated signal transduction and production of IFNB1 and pro-inflammatory cytokine IL6. In terms of biological role, in the nucleus, serves as transcriptional co-regulator. Acts as a mediator of transcriptional repression by nuclear hormone receptors via recruitment of histone deacetylases. Functions as an estrogen receptor (ER)-selective coregulator that potentiates the inhibitory activities of antiestrogens and represses the activity of estrogens. Competes with NCOA1 for modulation of ER transcriptional activity. Its function is as follows. In the plasma membrane, is involved in IGFBP6-induced cell migration. Cooperates with CD86 to mediate CD86-signaling in B lymphocytes that regulates the level of IgG1 produced through the activation of distal signaling intermediates. Upon CD40 engagement, required to activate NF-kappa-B signaling pathway via phospholipase C and protein kinase C activation. The polypeptide is Prohibitin-2 (Rattus norvegicus (Rat)).